Reading from the N-terminus, the 459-residue chain is Alpha,alpha-trehalose-phosphate synthase [UDP-forming] (459 aa).

D-glucose 6-phosphate is bound by residues Y86 and D140. 2 residues coordinate UDP: R262 and K267. R262 and K267 together coordinate UDP-alpha-D-glucose. A D-glucose 6-phosphate-binding site is contributed by R300. UDP-alpha-D-glucose is bound at residue 361-369 (DGMNLVALE). 365 to 369 (LVALE) serves as a coordination point for UDP.

The protein belongs to the glycosyltransferase 20 family. As to quaternary structure, component of the trehalose synthase complex.

Its subcellular location is the cytoplasm. The enzyme catalyses D-glucose 6-phosphate + UDP-alpha-D-glucose = alpha,alpha-trehalose 6-phosphate + UDP + H(+). Its function is as follows. Synthase catalytic subunit of the trehalose synthase complex that catalyzes the production of trehalose from glucose-6-phosphate and UDP-alpha-D-glucose in a two step process. Can function independently of the complex. The polypeptide is Alpha,alpha-trehalose-phosphate synthase [UDP-forming] (TPS1) (Encephalitozoon cuniculi (strain GB-M1) (Microsporidian parasite)).